Reading from the N-terminus, the 55-residue chain is Large ribosomal subunit protein bL33 (55 aa).

It belongs to the bacterial ribosomal protein bL33 family.

This is Large ribosomal subunit protein bL33 from Mycobacterium leprae (strain Br4923).